The sequence spans 371 residues: Putative glutamate--cysteine ligase 2 (371 aa).

The protein belongs to the glutamate--cysteine ligase type 2 family. YbdK subfamily.

It carries out the reaction L-cysteine + L-glutamate + ATP = gamma-L-glutamyl-L-cysteine + ADP + phosphate + H(+). Functionally, ATP-dependent carboxylate-amine ligase which exhibits weak glutamate--cysteine ligase activity. In Burkholderia lata (strain ATCC 17760 / DSM 23089 / LMG 22485 / NCIMB 9086 / R18194 / 383), this protein is Putative glutamate--cysteine ligase 2.